Reading from the N-terminus, the 222-residue chain is Hexitol phosphatase B (222 aa).

Asp-13 functions as the Nucleophile in the catalytic mechanism. Asp-13 and Asp-15 together coordinate a divalent metal cation. Substrate contacts are provided by residues 13-15 (DMD), 115-116 (SA), and Lys-148. Asp-15 acts as the Proton donor in catalysis. Asp-173 is an a divalent metal cation binding site.

It belongs to the HAD-like hydrolase superfamily. CbbY/CbbZ/Gph/YieH family. Mg(2+) is required as a cofactor. Mn(2+) serves as cofactor. It depends on Co(2+) as a cofactor. Requires Zn(2+) as cofactor.

It catalyses the reaction sugar phosphate + H2O = sugar + phosphate.. The enzyme catalyses 2-deoxy-D-glucose 6-phosphate + H2O = 2-deoxy-D-glucose + phosphate. It carries out the reaction D-mannitol 1-phosphate + H2O = D-mannitol + phosphate. The catalysed reaction is D-sorbitol 6-phosphate + H2O = D-sorbitol + phosphate. Functionally, sugar-phosphate phosphohydrolase that catalyzes the dephosphorylation of D-mannitol 1-phosphate and D-sorbitol 6-phosphate. Also catalyzes the dephosphorylation of 2-deoxyglucose 6-phosphate (2dGlu6P); this is a biologically important activity in vivo since it contributes to the elimination of this toxic compound and plays an important role in the resistance of E.coli to 2-deoxyglucose. To a lesser extent, is also able to dephosphorylate mannose 6-phosphate (Man6P), erythrose-4-phosphate, 2-deoxyribose-5-phosphate (2dRib5P), ribose-5-phosphate (Rib5P) and glucose-6-phosphate (Glu6P) in vitro. This Escherichia coli (strain K12) protein is Hexitol phosphatase B.